A 199-amino-acid chain; its full sequence is Charged multivesicular body protein 1b (199 aa).

Coiled-coil stretches lie at residues 8–42 (LFNL…AIQK) and 178–199 (TSVA…RDQV). Residues 167–199 (ELPQGQTGSVGTSVASTEQDELSQRLARLRDQV) form a disordered region. Positions 170-183 (QGQTGSVGTSVAST) are enriched in polar residues. The MIT-interacting motif signature appears at 186–196 (DELSQRLARLR).

It belongs to the SNF7 family. As to quaternary structure, probable peripherally associated component of the endosomal sorting required for transport complex III (ESCRT-III).

Its subcellular location is the cytoplasm. The protein localises to the cytosol. It is found in the endosome. It localises to the late endosome membrane. Functionally, probable peripherally associated component of the endosomal sorting required for transport complex III (ESCRT-III) which is involved in multivesicular bodies (MVBs) formation and sorting of endosomal cargo proteins into MVBs. MVBs contain intraluminal vesicles (ILVs) that are generated by invagination and scission from the limiting membrane of the endosome and mostly are delivered to lysosomes enabling degradation of membrane proteins, such as stimulated growth factor receptors, lysosomal enzymes and lipids. This chain is Charged multivesicular body protein 1b (chmp1b), found in Xenopus laevis (African clawed frog).